The following is a 305-amino-acid chain: Ribonuclease HIII (305 aa).

The region spanning 91–305 (WSVIGSDEVG…ANTQKAQKLL (215 aa)) is the RNase H type-2 domain. Residues D97, E98, and D201 each coordinate a divalent metal cation.

Belongs to the RNase HII family. RnhC subfamily. Mn(2+) is required as a cofactor. It depends on Mg(2+) as a cofactor.

Its subcellular location is the cytoplasm. It carries out the reaction Endonucleolytic cleavage to 5'-phosphomonoester.. Its function is as follows. Endonuclease that specifically degrades the RNA of RNA-DNA hybrids. This Enterococcus faecalis (strain ATCC 700802 / V583) protein is Ribonuclease HIII.